Reading from the N-terminus, the 207-residue chain is Small ribosomal subunit protein uS4 (207 aa).

The interval 31–55 is disordered; the sequence is KCKLDSKPGQHGRTSGARTSDYGTQ. The segment covering 42–53 has biased composition (polar residues); it reads GRTSGARTSDYG. One can recognise an S4 RNA-binding domain in the interval 97–160; it reads SRLDNVVYRM…KKQARIVEAL (64 aa).

This sequence belongs to the universal ribosomal protein uS4 family. As to quaternary structure, part of the 30S ribosomal subunit. Contacts protein S5. The interaction surface between S4 and S5 is involved in control of translational fidelity.

In terms of biological role, one of the primary rRNA binding proteins, it binds directly to 16S rRNA where it nucleates assembly of the body of the 30S subunit. With S5 and S12 plays an important role in translational accuracy. The sequence is that of Small ribosomal subunit protein uS4 from Burkholderia thailandensis (strain ATCC 700388 / DSM 13276 / CCUG 48851 / CIP 106301 / E264).